Consider the following 545-residue polypeptide: Carboxypeptidase Y homolog A (545 aa).

Positions 1-17 (MKSLALALLVGGAIAAG) are cleaved as a signal peptide. A propeptide spanning residues 18–123 (PQQQVLQAPV…KLEAYDLRVK (106 aa)) is cleaved from the precursor. 5 disulfide bridges follow: Cys-177/Cys-416, Cys-311/Cys-325, Cys-335/Cys-358, Cys-342/Cys-351, and Cys-380/Cys-386. Asn-208 carries N-linked (GlcNAc...) asparagine glycosylation. Residue Ser-264 is part of the active site. Asp-455 is an active-site residue. Residues Asn-485, Asn-491, and Asn-506 are each glycosylated (N-linked (GlcNAc...) asparagine). The active site involves His-517.

Belongs to the peptidase S10 family.

The protein localises to the vacuole. It catalyses the reaction Release of a C-terminal amino acid with broad specificity.. Vacuolar carboxypeptidase involved in degradation of small peptides. Digests preferentially peptides containing an aliphatic or hydrophobic residue in P1' position, as well as methionine, leucine or phenylalanine in P1 position of ester substrate. The sequence is that of Carboxypeptidase Y homolog A (CPYA) from Blastomyces gilchristii (strain SLH14081) (Blastomyces dermatitidis).